Here is a 127-residue protein sequence, read N- to C-terminus: Secreted RxLR effector protein 3 (127 aa).

The first 20 residues, 1–20, serve as a signal peptide directing secretion; sequence MRPPLLLFLTVTVLVSCASA. The RxLR-dEER signature appears at 30–48; it reads RSLRSIKTTTNDDAAEEER.

This sequence belongs to the RxLR effector family.

The protein localises to the secreted. The protein resides in the host cell. Functionally, secreted effector that partially suppresses elicitor-induced cell death in host and enhances virulence of P.parasitica. This Phytophthora nicotianae (Potato buckeye rot agent) protein is Secreted RxLR effector protein 3.